A 494-amino-acid polypeptide reads, in one-letter code: Aspartyl/glutamyl-tRNA(Asn/Gln) amidotransferase subunit B (494 aa).

Belongs to the GatB/GatE family. GatB subfamily. In terms of assembly, heterotrimer of A, B and C subunits.

It catalyses the reaction L-glutamyl-tRNA(Gln) + L-glutamine + ATP + H2O = L-glutaminyl-tRNA(Gln) + L-glutamate + ADP + phosphate + H(+). The enzyme catalyses L-aspartyl-tRNA(Asn) + L-glutamine + ATP + H2O = L-asparaginyl-tRNA(Asn) + L-glutamate + ADP + phosphate + 2 H(+). Functionally, allows the formation of correctly charged Asn-tRNA(Asn) or Gln-tRNA(Gln) through the transamidation of misacylated Asp-tRNA(Asn) or Glu-tRNA(Gln) in organisms which lack either or both of asparaginyl-tRNA or glutaminyl-tRNA synthetases. The reaction takes place in the presence of glutamine and ATP through an activated phospho-Asp-tRNA(Asn) or phospho-Glu-tRNA(Gln). In Rhizorhabdus wittichii (strain DSM 6014 / CCUG 31198 / JCM 15750 / NBRC 105917 / EY 4224 / RW1) (Sphingomonas wittichii), this protein is Aspartyl/glutamyl-tRNA(Asn/Gln) amidotransferase subunit B.